The chain runs to 401 residues: Pyruvyl transferase 1 (401 aa).

The first 30 residues, 1 to 30 (MFANINIRKSVWLFLLAAVSCTLFIYGVTR), serve as a signal peptide directing secretion. A disordered region spans residues 38–64 (NPSSLTSPSSSTSVDKKKPLFTKSPRN). The span at 39-50 (PSSLTSPSSSTS) shows a compositional bias: low complexity.

The protein belongs to the polysaccharide pyruvyl transferase family.

Its function is as follows. Involved in cell wall biogenesis. Has a role in the addition of Gal-beta1,3 moieties to galactomannans and their subsequent pyruvylation. The sequence is that of Pyruvyl transferase 1 (pvg1) from Schizosaccharomyces pombe (strain 972 / ATCC 24843) (Fission yeast).